Consider the following 431-residue polypeptide: Light-independent protochlorophyllide reductase subunit N (431 aa).

[4Fe-4S] cluster is bound by residues C29, C54, and C114.

This sequence belongs to the BchN/ChlN family. As to quaternary structure, protochlorophyllide reductase is composed of three subunits; ChlL, ChlN and ChlB. Forms a heterotetramer of two ChlB and two ChlN subunits. Requires [4Fe-4S] cluster as cofactor.

It is found in the plastid. The protein localises to the chloroplast. The enzyme catalyses chlorophyllide a + oxidized 2[4Fe-4S]-[ferredoxin] + 2 ADP + 2 phosphate = protochlorophyllide a + reduced 2[4Fe-4S]-[ferredoxin] + 2 ATP + 2 H2O. Its pathway is porphyrin-containing compound metabolism; chlorophyll biosynthesis (light-independent). Its function is as follows. Component of the dark-operative protochlorophyllide reductase (DPOR) that uses Mg-ATP and reduced ferredoxin to reduce ring D of protochlorophyllide (Pchlide) to form chlorophyllide a (Chlide). This reaction is light-independent. The NB-protein (ChlN-ChlB) is the catalytic component of the complex. The chain is Light-independent protochlorophyllide reductase subunit N from Nephroselmis olivacea (Green alga).